Here is a 5488-residue protein sequence, read N- to C-terminus: Polyketide synthase PksN (5488 aa).

The interval 3–301 is condensation; sequence RQLKSPLSEG…NMMAVRSKNI (299 aa). The stretch at 165-205 is one WD 1 repeat; it reads QQPSTADYYDFVDWENRMLTGREGEEHLAYWKEQLSGSLPV. Residues 493-903 form an adenylation region; the sequence is TYKEVDEKST…EFPGILDQAV (411 aa). Residues 965-1006 form a WD 2 repeat; sequence RKELEKREIVFNRRKPNHLQLTEIEDQVLRIWEETLKVSGFG. Positions 983–1058 constitute a Carrier 1 domain; the sequence is LQLTEIEDQV…AISEYILEMK (76 aa). Serine 1018 is modified (O-(pantetheine 4'-phosphoryl)serine). The region spanning 1089 to 1515 is the Ketosynthase family 3 (KS3) 1 domain; it reads DDSVAIVGIS…GTNAHAIFEQ (427 aa). Residues cysteine 1261, histidine 1397, and histidine 1437 each act as for beta-ketoacyl synthase 1 activity in the active site. Residues 1700–1826 form an N-terminal hotdog fold 1 region; sequence HPLVHHNTSV…GKAELIQLKR (127 aa). The PKS/mFAS DH 1 domain occupies 1700–1992; sequence HPLVHHNTSV…TRVMEADIQT (293 aa). Histidine 1729 serves as the catalytic Proton acceptor; for dehydratase activity 1. The tract at residues 1840 to 1992 is C-terminal hotdog fold 1; it reads DQSKMDAASF…TRVMEADIQT (153 aa). Aspartate 1900 functions as the Proton donor; for dehydratase activity 1 in the catalytic mechanism. A WD 3 repeat occupies 2165–2204; the sequence is KQAKGDGSKPWKDNGVYLISGGAGGLGHIFAKEIAEQTKN. The Carrier 2 domain occupies 2448–2525; the sequence is SLLDKVKAML…AFGKHLSEEY (78 aa). Position 2485 is an O-(pantetheine 4'-phosphoryl)serine (serine 2485). The region spanning 2576-3012 is the Ketosynthase family 3 (KS3) 2 domain; that stretch reads PEPIAIVGIS…GVNAHVIIEE (437 aa). Residues cysteine 2747, histidine 2882, and histidine 2928 each act as for beta-ketoacyl synthase 2 activity in the active site. Positions 3038-3109 form a coiled coil; that stretch reads KNEARLKEHA…AAEKSGVEDV (72 aa). Positions 3207–3332 are N-terminal hotdog fold 2; sequence HPLMHQNTSN…GSAVLNPAEN (126 aa). The PKS/mFAS DH 2 domain occupies 3207–3492; that stretch reads HPLMHQNTSN…FRAAEGGSGS (286 aa). Residue histidine 3236 is the Proton acceptor; for dehydratase activity 2 of the active site. The segment at 3346–3492 is C-terminal hotdog fold 2; that stretch reads QESHFSVNEV…FRAAEGGSGS (147 aa). The active-site Proton donor; for dehydratase activity 2 is aspartate 3408. A coiled-coil region spans residues 3626–3655; sequence DSHENVESVIEKLKENKRHTEDQHIKYEKG. The WD 4 repeat unit spans residues 3666–3705; that stretch reads QIDDREISMPWRDKGVYLITGGAGGLGFIFAKEIARQAEQ. The Carrier 3 domain maps to 3952–4026; the sequence is DHIQEVLKQT…AFAGYLSEEY (75 aa). O-(pantetheine 4'-phosphoryl)serine is present on serine 3986. The Ketosynthase family 3 (KS3) 3 domain occupies 4076 to 4511; sequence PEPIAIVGMS…GVNAHVVIEE (436 aa). Catalysis depends on for beta-ketoacyl synthase 3 activity residues cysteine 4245, histidine 4380, and histidine 4427. The interval 4706–4830 is N-terminal hotdog fold 3; that stretch reads HPLIHVNTSD…GSASIRGAGD (125 aa). A PKS/mFAS DH 3 domain is found at 4706-4988; the sequence is HPLIHVNTSD…SRLLEEGIQP (283 aa). Residue histidine 4735 is the Proton acceptor; for dehydratase activity 3 of the active site. The interval 4844 to 4988 is C-terminal hotdog fold 3; the sequence is SLSTLSHDQC…SRLLEEGIQP (145 aa). Catalysis depends on aspartate 4906, which acts as the Proton donor; for dehydratase activity 3. The stretch at 5206–5244 is one WD 5 repeat; the sequence is HNNQPVHTKYKHGGVYVVIGGAGGIGEAWSEYMIRTYQA. Positions 5275 to 5303 form a coiled coil; that stretch reads IQADAANREELERAYETMKQTHREINGII.

This sequence belongs to the ATP-dependent AMP-binding enzyme family. The cofactor is pantetheine 4'-phosphate.

It localises to the cytoplasm. The protein operates within antibiotic biosynthesis; bacillaene biosynthesis. Its function is as follows. Involved in some intermediate steps for the synthesis of the antibiotic polyketide bacillaene which is involved in secondary metabolism. In Bacillus subtilis (strain 168), this protein is Polyketide synthase PksN (pksN).